Here is a 122-residue protein sequence, read N- to C-terminus: MIQEQTILNVADNSGARSAMCIKVLGGSRRRYARIGDIIKITIKEAIPRGKVKKGEVLKAVVVRTKKGVRRSDGSIIRFDNNACVVLNNNEQPVGTRIFGPVTRELRIEKFMKIISLAPEVL.

It belongs to the universal ribosomal protein uL14 family. In terms of assembly, part of the 50S ribosomal subunit. Forms a cluster with proteins L3 and L19. In the 70S ribosome, L14 and L19 interact and together make contacts with the 16S rRNA in bridges B5 and B8.

Binds to 23S rRNA. Forms part of two intersubunit bridges in the 70S ribosome. This is Large ribosomal subunit protein uL14 from Buchnera aphidicola subsp. Schizaphis graminum (strain Sg).